Consider the following 1335-residue polypeptide: Protein SPATA31F1 (1335 aa).

A helical transmembrane segment spans residues 8 to 28 (LWEVGYPLYIYGSIFIVIVII). 5 disordered regions span residues 403 to 424 (ALKA…SGSD), 480 to 502 (LPKT…MSPS), 972 to 1002 (VQQN…SGDM), 1019 to 1141 (PSLE…LQDS), and 1248 to 1335 (ENVA…GHPT). Positions 414 to 424 (SGGQDNDSGSD) are enriched in polar residues. Residues 972 to 1000 (VQQNQKQSNSKAVPQGSAHSVSKISQPSG) are compositionally biased toward polar residues. Basic and acidic residues-rich tracts occupy residues 1047 to 1064 (NRED…REGD), 1071 to 1083 (STRE…EDQR), and 1129 to 1139 (PGEKESEKDLQ).

The protein belongs to the SPATA31 family.

The protein resides in the membrane. This Homo sapiens (Human) protein is Protein SPATA31F1.